Reading from the N-terminus, the 119-residue chain is Large ribosomal subunit protein bL19 (119 aa).

This sequence belongs to the bacterial ribosomal protein bL19 family.

Its function is as follows. This protein is located at the 30S-50S ribosomal subunit interface and may play a role in the structure and function of the aminoacyl-tRNA binding site. This is Large ribosomal subunit protein bL19 from Limosilactobacillus reuteri (strain DSM 20016) (Lactobacillus reuteri).